Here is a 138-residue protein sequence, read N- to C-terminus: Iron sulfur cluster assembly protein 1 (138 aa).

This sequence belongs to the NifU family. In terms of assembly, component of the core Fe-S cluster (ISC) assembly machinery. It depends on [2Fe-2S] cluster as a cofactor.

It is found in the cytoplasm. It participates in cofactor biosynthesis; iron-sulfur cluster biosynthesis. Its function is as follows. Scaffold protein for the de novo synthesis of iron-sulfur (Fe-S) clusters within mitosomes, which is required for maturation of both [2Fe-2S] and [4Fe-4S] proteins. First, a [2Fe-2S] cluster is transiently assembled on the scaffold protein ISU1. In a second step, the cluster is released from ISU1, transferred to a glutaredoxin, followed by the formation of [2Fe-2S] proteins, the synthesis of [4Fe-4S] clusters and their target-specific insertion into the recipient apoproteins. Cluster assembly on ISU1 depends on the function of the cysteine desulfurase complex NFS1-ISD11, which serves as the sulfur donor for cluster synthesis, the iron-binding protein frataxin as the putative iron donor, and the electron transfer chain comprised of ferredoxin reductase and ferredoxin, which receive their electrons from NADH. The polypeptide is Iron sulfur cluster assembly protein 1 (ISU1) (Trachipleistophora hominis (Microsporidian parasite)).